The chain runs to 468 residues: UDP-N-acetylmuramate--L-alanine ligase (468 aa).

112–118 (GTHGKTT) is an ATP binding site.

Belongs to the MurCDEF family.

The protein localises to the cytoplasm. The catalysed reaction is UDP-N-acetyl-alpha-D-muramate + L-alanine + ATP = UDP-N-acetyl-alpha-D-muramoyl-L-alanine + ADP + phosphate + H(+). It functions in the pathway cell wall biogenesis; peptidoglycan biosynthesis. In terms of biological role, cell wall formation. The chain is UDP-N-acetylmuramate--L-alanine ligase from Bordetella bronchiseptica (strain ATCC BAA-588 / NCTC 13252 / RB50) (Alcaligenes bronchisepticus).